Here is a 706-residue protein sequence, read N- to C-terminus: Fatty acid oxidation complex subunit alpha (706 aa).

The enoyl-CoA hydratase stretch occupies residues 1-188 (MEKTFNLTRR…KMGLVNDVVP (188 aa)). The 3-hydroxyacyl-CoA dehydrogenase stretch occupies residues 308 to 706 (RKVKKAVILG…TMAQENAHFF (399 aa)).

The protein in the N-terminal section; belongs to the enoyl-CoA hydratase/isomerase family. It in the central section; belongs to the 3-hydroxyacyl-CoA dehydrogenase family. Heterotetramer of two alpha chains (FadJ) and two beta chains (FadI).

Its subcellular location is the cytoplasm. The enzyme catalyses a (3S)-3-hydroxyacyl-CoA = a (2E)-enoyl-CoA + H2O. It catalyses the reaction a 4-saturated-(3S)-3-hydroxyacyl-CoA = a (3E)-enoyl-CoA + H2O. The catalysed reaction is a (3S)-3-hydroxyacyl-CoA + NAD(+) = a 3-oxoacyl-CoA + NADH + H(+). It carries out the reaction (3S)-3-hydroxybutanoyl-CoA = (3R)-3-hydroxybutanoyl-CoA. It participates in lipid metabolism; fatty acid beta-oxidation. In terms of biological role, catalyzes the formation of a hydroxyacyl-CoA by addition of water on enoyl-CoA. Also exhibits 3-hydroxyacyl-CoA epimerase and 3-hydroxyacyl-CoA dehydrogenase activities. This chain is Fatty acid oxidation complex subunit alpha, found in Shewanella baltica (strain OS185).